The sequence spans 492 residues: MTLWINGDWITGQGASRVKRNPVSGEVLWQGNDADAAQVEQACRAARAAFPRWARLSLAERQVVVERFAGLLERNKGELTAIIARETGKPRWEAATEVTAMINKIAISIKAYHVRTGEQRSEMPDGAASLRHCPHGVLAVFGPYNFPGHLPNGHIVPALLAGNTIIFKPSELTPWSGEAVMRLWQQAGLPPGVLNLVQGGRETGQALSALEDLDGLLFTGSANTGYQLHRQLSGQPEKILALEMGGNNPLIIDEVADIDAAVHLTIQSAFVTAGQRCTCARRLLLKSGAQGDAFLARLVAVSQRLTPGNWDDEPQPFIGGLISEQAAQQVVTAWQQLEAMGGRTLLAPRLLQSETSLLTPGIIEMTGVAGVPDEEVFGPLLRVWRYDSFEEAILMANNTRFGLSCGLVSPEREKFDQLLLEARAGIVNWNKPLTGAASTAPFGGIGASGNHRPSAWYAADYCAWPMASLESDSLTLPATLNPGLDFSDEVVR.

Position 220-225 (Gly220–Gly225) interacts with NAD(+). Residues Glu243 and Cys277 contribute to the active site.

The protein belongs to the aldehyde dehydrogenase family. AstD subfamily.

The catalysed reaction is N-succinyl-L-glutamate 5-semialdehyde + NAD(+) + H2O = N-succinyl-L-glutamate + NADH + 2 H(+). The protein operates within amino-acid degradation; L-arginine degradation via AST pathway; L-glutamate and succinate from L-arginine: step 4/5. Its function is as follows. Catalyzes the NAD-dependent reduction of succinylglutamate semialdehyde into succinylglutamate. This is N-succinylglutamate 5-semialdehyde dehydrogenase from Escherichia coli (strain SE11).